A 96-amino-acid polypeptide reads, in one-letter code: Frd operon uncharacterized protein C (96 aa).

Belongs to the HupF/HypC family.

In Proteus vulgaris, this protein is Frd operon uncharacterized protein C.